A 350-amino-acid polypeptide reads, in one-letter code: Methylthioribose-1-phosphate isomerase (350 aa).

Asp-241 acts as the Proton donor in catalysis.

It belongs to the eIF-2B alpha/beta/delta subunits family. MtnA subfamily.

Its subcellular location is the cytoplasm. It is found in the nucleus. It catalyses the reaction 5-(methylsulfanyl)-alpha-D-ribose 1-phosphate = 5-(methylsulfanyl)-D-ribulose 1-phosphate. Its pathway is amino-acid biosynthesis; L-methionine biosynthesis via salvage pathway; L-methionine from S-methyl-5-thio-alpha-D-ribose 1-phosphate: step 1/6. Catalyzes the interconversion of methylthioribose-1-phosphate (MTR-1-P) into methylthioribulose-1-phosphate (MTRu-1-P). This is Methylthioribose-1-phosphate isomerase from Nematostella vectensis (Starlet sea anemone).